The sequence spans 133 residues: MLSPEAERVLRYLVEVEELAEEVLADKRQIVDLDTKRNRNREGLRALQKDLSLTEDVMVCFGNMFIRMPHPETKEMIEKDQEHLDKEIERLRKQLKVKVNRLFEAQGKPELKGFNLTPLNQDELKALKVILKG.

Belongs to the prefoldin subunit beta family. As to quaternary structure, component of the PAQosome complex which is responsible for the biogenesis of several protein complexes and which consists of R2TP complex members RUVBL1, RUVBL2, RPAP3 and PIH1D1, URI complex members PFDN2, PFDN6, PDRG1, UXT and URI1 as well as ASDURF, POLR2E and DNAAF10/WDR92.

The protein resides in the cytoplasm. May play a role in chaperone-mediated protein folding. This chain is p53 and DNA damage-regulated protein 1 (PDRG1), found in Bos taurus (Bovine).